A 427-amino-acid chain; its full sequence is ATP-dependent RNA helicase DDX39A (427 aa).

Positions Met-1–Pro-19 are enriched in acidic residues. The interval Met-1–Lys-35 is disordered. Ala-2 is modified (N-acetylalanine). Lys-31 is covalently cross-linked (Glycyl lysine isopeptide (Lys-Gly) (interchain with G-Cter in SUMO2)). N6-acetyllysine; alternate is present on Lys-35. Residue Lys-35 forms a Glycyl lysine isopeptide (Lys-Gly) (interchain with G-Cter in SUMO2); alternate linkage. A Phosphoserine modification is found at Ser-37. Residues Ser-44 to His-72 carry the Q motif motif. In terms of domain architecture, Helicase ATP-binding spans Ile-75–Val-248. Residue Ala-88–Thr-95 coordinates ATP. Residues Lys-154 and Lys-162 each participate in a glycyl lysine isopeptide (Lys-Gly) (interchain with G-Cter in SUMO2) cross-link. Thr-171 is subject to Phosphothreonine. The short motif at Asp-195–Asp-198 is the DECD box element. Glycyl lysine isopeptide (Lys-Gly) (interchain with G-Cter in SUMO2) cross-links involve residues Lys-240 and Lys-255. The Helicase C-terminal domain occupies Gly-260–Thr-421. Ser-426 is modified (phosphoserine).

It belongs to the DEAD box helicase family. DECD subfamily. Binds ALYREF/THOC4 and DDX39B/BAT1. Interacts with the apo-AREX complex component SARNP. Interacts with MX1. Interacts with MCM3AP isoform GANP. Interacts with ECD. Interacts with PHAX; this interaction stimulates PHAX RNA binding activity. SUMOylated by RANBP2; SUMOylation modification affects its ability to bind RNA.

Its subcellular location is the nucleus. The protein resides in the cytoplasm. The enzyme catalyses ATP + H2O = ADP + phosphate + H(+). Functionally, helicase that plays an essential role in mRNA export and is involved in multiple steps in RNA metabolism including alternative splicing. Regulates nuclear mRNA export to the cytoplasm through association with ECD. Also involved in spliceosomal uridine-rich small nuclear RNA (U snRNA) export by stimulating the RNA binding of adapter PHAX. Plays a role in the negative regulation of type I IFN production by increasing the nuclear retention of antiviral transcripts and thus reducing their protein expression. Independently of the interferon pathway, plays an antiviral role against alphaviruses by binding to a 5' conserved sequence element in the viral genomic RNA. The sequence is that of ATP-dependent RNA helicase DDX39A (Ddx39a) from Rattus norvegicus (Rat).